Consider the following 507-residue polypeptide: Putative propionyl-CoA carboxylase beta chain (507 aa).

Basic and acidic residues predominate over residues 1–25; the sequence is MNEHMDHFYTKRKQAEEGGGREKLA. Residues 1–30 are disordered; that stretch reads MNEHMDHFYTKRKQAEEGGGREKLAQQRQK. The 254-residue stretch at 1 to 254 folds into the CoA carboxyltransferase N-terminal domain; that stretch reads MNEHMDHFYT…NGRTTEPKPE (254 aa). The interval 1–501 is carboxyltransferase; it reads MNEHMDHFYT…HKTEERPKKK (501 aa). One can recognise a CoA carboxyltransferase C-terminal domain in the interval 256-501; the sequence is EASRPLLNRL…HKTEERPKKK (246 aa).

Belongs to the AccD/PCCB family. As to quaternary structure, probably a dodecamer composed of six biotin-containing alpha subunits and six beta subunits.

The enzyme catalyses propanoyl-CoA + hydrogencarbonate + ATP = (S)-methylmalonyl-CoA + ADP + phosphate + H(+). It participates in metabolic intermediate metabolism; propanoyl-CoA degradation; succinyl-CoA from propanoyl-CoA: step 1/3. The polypeptide is Putative propionyl-CoA carboxylase beta chain (yqjD) (Bacillus subtilis (strain 168)).